We begin with the raw amino-acid sequence, 954 residues long: Glycine dehydrogenase (decarboxylating) (954 aa).

An N6-(pyridoxal phosphate)lysine modification is found at lysine 704.

Belongs to the GcvP family. The glycine cleavage system is composed of four proteins: P, T, L and H. Requires pyridoxal 5'-phosphate as cofactor.

The catalysed reaction is N(6)-[(R)-lipoyl]-L-lysyl-[glycine-cleavage complex H protein] + glycine + H(+) = N(6)-[(R)-S(8)-aminomethyldihydrolipoyl]-L-lysyl-[glycine-cleavage complex H protein] + CO2. In terms of biological role, the glycine cleavage system catalyzes the degradation of glycine. The P protein binds the alpha-amino group of glycine through its pyridoxal phosphate cofactor; CO(2) is released and the remaining methylamine moiety is then transferred to the lipoamide cofactor of the H protein. In Sinorhizobium medicae (strain WSM419) (Ensifer medicae), this protein is Glycine dehydrogenase (decarboxylating).